A 393-amino-acid chain; its full sequence is Protein DDI1 homolog 2 (393 aa).

In terms of domain architecture, Ubiquitin-like spans 1 to 81; sequence MLITVYCVRR…VILRQKEAPE (81 aa). The tract at residues 82-127 is disordered; that stretch reads TRPAAPFPGLDFSTIAVPGASSQPDPSQPQAPPPPPDTSSFPQGLD. Over residues 107-118 the composition is skewed to pro residues; it reads PSQPQAPPPPPD. Asp246 is an active-site residue. The short motif at 370 to 389 is the Ubiquitin-binding element; it reads EEIADRELAEVLQKSADEAD.

It belongs to the DDI1 family. As to quaternary structure, homodimer.

The protein localises to the cytoplasm. It localises to the cytosol. It is found in the chromosome. Functionally, aspartic protease that mediates the cleavage of NFE2L1/NRF1 at 'Leu-104', thereby promoting release of NFE2L1/NRF1 from the endoplasmic reticulum membrane. Ubiquitination of NFE2L1/NRF1 is a prerequisite for cleavage, suggesting that DDI2 specifically recognizes and binds ubiquitinated NFE2L1/NRF1. Seems to act as a proteasomal shuttle which links the proteasome and replication fork proteins like RTF2. Required for cellular survival following replication stress. This Xenopus laevis (African clawed frog) protein is Protein DDI1 homolog 2 (ddi2).